Here is a 213-residue protein sequence, read N- to C-terminus: Adenylate kinase (213 aa).

10-15 (GCGKGT) is an ATP binding site. The interval 30-59 (STGDLMRKEISLNTRLGLKCQEYMNAGKYV) is NMP. AMP-binding positions include Thr31, Arg36, 57-59 (KYV), 83-86 (GYPR), and Gln90. Positions 124–161 (NRLVCPLCKASFNLETRKPKQEGLCDFDNTKLVKRSDD) are LID. Arg125 contributes to the ATP binding site. 2 residues coordinate Zn(2+): Cys128 and Cys131. 134 to 135 (SF) provides a ligand contact to ATP. Zn(2+) contacts are provided by Cys148 and Asp151. AMP-binding residues include Arg158 and Arg169. Position 197 (Asp197) interacts with ATP.

This sequence belongs to the adenylate kinase family. In terms of assembly, monomer.

It is found in the cytoplasm. The enzyme catalyses AMP + ATP = 2 ADP. It functions in the pathway purine metabolism; AMP biosynthesis via salvage pathway; AMP from ADP: step 1/1. Its function is as follows. Catalyzes the reversible transfer of the terminal phosphate group between ATP and AMP. Plays an important role in cellular energy homeostasis and in adenine nucleotide metabolism. The chain is Adenylate kinase from Mycoplasma mycoides subsp. mycoides SC (strain CCUG 32753 / NCTC 10114 / PG1).